The primary structure comprises 630 residues: Protein mono-ADP-ribosyltransferase PARP6 (630 aa).

Cysteine 237 is modified (ADP-ribosylcysteine). Positions 394-620 (EMTQGSYLEI…QDPKIQKEIM (227 aa)) constitute a PARP catalytic domain. Aspartate 600 carries the post-translational modification ADP-ribosyl aspartic acid.

This sequence belongs to the ARTD/PARP family. Auto-mono-ADP-ribosylated.

The catalysed reaction is L-aspartyl-[protein] + NAD(+) = 4-O-(ADP-D-ribosyl)-L-aspartyl-[protein] + nicotinamide. It catalyses the reaction L-cysteinyl-[protein] + NAD(+) = S-(ADP-D-ribosyl)-L-cysteinyl-[protein] + nicotinamide + H(+). Its function is as follows. Mono-ADP-ribosyltransferase that mediates mono-ADP-ribosylation of target proteins. In Homo sapiens (Human), this protein is Protein mono-ADP-ribosyltransferase PARP6.